Reading from the N-terminus, the 156-residue chain is Small ribosomal subunit protein uS7 (156 aa).

Belongs to the universal ribosomal protein uS7 family. As to quaternary structure, part of the 30S ribosomal subunit. Contacts proteins S9 and S11.

Functionally, one of the primary rRNA binding proteins, it binds directly to 16S rRNA where it nucleates assembly of the head domain of the 30S subunit. Is located at the subunit interface close to the decoding center, probably blocks exit of the E-site tRNA. The polypeptide is Small ribosomal subunit protein uS7 (Methylobacterium radiotolerans (strain ATCC 27329 / DSM 1819 / JCM 2831 / NBRC 15690 / NCIMB 10815 / 0-1)).